A 157-amino-acid chain; its full sequence is Beta-defensin 125 (157 aa).

Positions 1–20 (MNILMLTFIICGLLTQVTKG) are cleaved as a signal peptide. 3 cysteine pairs are disulfide-bonded: cysteine 27–cysteine 55, cysteine 35–cysteine 49, and cysteine 39–cysteine 56. Positions 109–157 (GETMTPETNTPETTMPPPETTTPETTMPPSETATSETMPPPSQRALTHN) are disordered. Composition is skewed to low complexity over residues 110–121 (ETMTPETNTPET) and 129–145 (TTPETTMPPSETATSET).

Belongs to the beta-defensin family.

It localises to the secreted. In terms of biological role, has antibacterial activity. The chain is Beta-defensin 125 (DEFB125) from Pan troglodytes (Chimpanzee).